Consider the following 893-residue polypeptide: MPQKEVTIPVPAKGGSNKEEDKKDNKDTEEKNTTTNTTTKDNKKDKKKDKKEETLSPEDEKLKNDLELLVERSRDEKEEIALAALEALKTEIRSSTSSMTSVPKPLKFLRNHYSTLVDIYKNSKEGKAKTSLADILSVLAMANGNDERDTLKYKLLGSGEAIASWGHEYVKHLATEIGVEYDIKKEENQSVEDLLKLVDEIVPFQMTHNAEPEACDLLLEVEQLSKIFQYIDENNYSRVCLYLFKCSYYVPGPDDINILKVCVEIYIKMKQYPDALRVAMKISDPELITEIFKLVENNKSILQQLGFLVARQKIVPDNFNYDSISDIINNSKLSEYFMNLATDLDIREPKLPEEIFQSHLDSTSAIADSARMNLASSFVNAFVNAGFGKDKLMTAEEDTKWWFKNRELGILSTVASTGMVVLWDIDGGLTKIDKFLYSQEKHCSNGALMAIGMLTSGIRSEMDPALSLLAEHINSSNTGTRISAIFGLGLAYAGTQRQDLMSLLSPCLDDDKEKMEFIGIVGLALGLIFIGSCDPELSTLFVQTLIQRGTAASESHARFLHLGLGLLYLGKQDAAELALETLKAIEGKGGEYARLTVEACAYAGTGNVLKVQNMLHFCSDGQENPHHGLAVLSIALIAMGEELGSDMCLRMFDHLLQKGNVHIKRAIPLALGLLSPSNPRIAIMDILSKLSHDNDPEVAQGAILSLGLIGAGTNNARIGGMLRALAVFYGKDVHLFFVRIAQGLLHLGKGTMTINPYHSDRTLMSPVAVGGLLALLHAGLDIKNILSTQSHYLFFSIVCSMYPRMLMTLDEDLKPLPVSVRVGQSVDIVGLAGKPKTITGFQTHTTPVLLGYNERAELATDDYIPLTNILEGIVILKPNPNASVTSPLASKKN.

Residues 1 to 59 form a disordered region; the sequence is MPQKEVTIPVPAKGGSNKEEDKKDNKDTEEKNTTTNTTTKDNKKDKKKDKKEETLSPED. Basic and acidic residues-rich tracts occupy residues 16–32 and 40–59; these read SNKEEDKKDNKDTEEKN and KDNKKDKKKDKKEETLSPED. PC repeat units follow at residues 412–445, 446–482, 483–517, 522–555, 562–583, 666–700, and 701–735; these read STVASTGMVVLWDIDGGLTKIDKFLYSQEKHCSN, GALMAIGMLTSGIRSEMDPALSLLAEHINSSNTGTRI, SAIFGLGLAYAGTQRQDLMSLLSPCLDDDKEKMEF, GLALGLIFIGSCDPELSTLFVQTLIQRGTAASES, LGLGLLYLGKQDAAELALETLK, AIPLALGLLSPSNPRIAIMDILSKLSHDNDPEVAQ, and GAILSLGLIGAGTNNARIGGMLRALAVFYGKDVHL.

Belongs to the proteasome subunit S2 family.

In terms of biological role, acts as a regulatory subunit of the 26 proteasome which is involved in the ATP-dependent degradation of ubiquitinated proteins. The protein is 26S proteasome non-ATPase regulatory subunit 2 (psmD2) of Dictyostelium discoideum (Social amoeba).